The primary structure comprises 324 residues: Glyoxylate/hydroxypyruvate reductase B (324 aa).

Active-site residues include Arg237 and Glu266. His285 (proton donor) is an active-site residue.

Belongs to the D-isomer specific 2-hydroxyacid dehydrogenase family. GhrB subfamily. In terms of assembly, homodimer.

It is found in the cytoplasm. The catalysed reaction is glycolate + NADP(+) = glyoxylate + NADPH + H(+). The enzyme catalyses (R)-glycerate + NAD(+) = 3-hydroxypyruvate + NADH + H(+). It carries out the reaction (R)-glycerate + NADP(+) = 3-hydroxypyruvate + NADPH + H(+). Catalyzes the NADPH-dependent reduction of glyoxylate and hydroxypyruvate into glycolate and glycerate, respectively. This Shigella dysenteriae serotype 1 (strain Sd197) protein is Glyoxylate/hydroxypyruvate reductase B.